We begin with the raw amino-acid sequence, 484 residues long: Glutamyl-tRNA(Gln) amidotransferase subunit A (484 aa).

Catalysis depends on charge relay system residues Lys-77 and Ser-152. Ser-176 functions as the Acyl-ester intermediate in the catalytic mechanism.

The protein belongs to the amidase family. GatA subfamily. In terms of assembly, heterotrimer of A, B and C subunits.

The catalysed reaction is L-glutamyl-tRNA(Gln) + L-glutamine + ATP + H2O = L-glutaminyl-tRNA(Gln) + L-glutamate + ADP + phosphate + H(+). Functionally, allows the formation of correctly charged Gln-tRNA(Gln) through the transamidation of misacylated Glu-tRNA(Gln) in organisms which lack glutaminyl-tRNA synthetase. The reaction takes place in the presence of glutamine and ATP through an activated gamma-phospho-Glu-tRNA(Gln). This is Glutamyl-tRNA(Gln) amidotransferase subunit A from Pseudomonas aeruginosa (strain ATCC 15692 / DSM 22644 / CIP 104116 / JCM 14847 / LMG 12228 / 1C / PRS 101 / PAO1).